Consider the following 652-residue polypeptide: Acetyl-coenzyme A synthetase (652 aa).

CoA is bound by residues R189 to K192 and T311. Residues G387–P389, D411–T416, D500, and R515 contribute to the ATP site. Position 523 (S523) interacts with CoA. Residue R526 participates in ATP binding. Residues V537, H539, and V542 each coordinate Mg(2+). R584 lines the CoA pocket. Position 609 is an N6-acetyllysine (K609).

Belongs to the ATP-dependent AMP-binding enzyme family. Requires Mg(2+) as cofactor. Post-translationally, acetylated. Deacetylation by the SIR2-homolog deacetylase activates the enzyme.

The catalysed reaction is acetate + ATP + CoA = acetyl-CoA + AMP + diphosphate. Its function is as follows. Catalyzes the conversion of acetate into acetyl-CoA (AcCoA), an essential intermediate at the junction of anabolic and catabolic pathways. AcsA undergoes a two-step reaction. In the first half reaction, AcsA combines acetate with ATP to form acetyl-adenylate (AcAMP) intermediate. In the second half reaction, it can then transfer the acetyl group from AcAMP to the sulfhydryl group of CoA, forming the product AcCoA. This Rhizobium rhizogenes (Agrobacterium rhizogenes) protein is Acetyl-coenzyme A synthetase.